Reading from the N-terminus, the 43-residue chain is ATCDILSFQSQWVTPNHAGCALHCVIKGYKGGQCKITVCHCRR.

3 cysteine pairs are disulfide-bonded: cysteine 3-cysteine 34, cysteine 20-cysteine 39, and cysteine 24-cysteine 41.

The protein belongs to the invertebrate defensin family. Type 1 subfamily.

It localises to the secreted. Its function is as follows. Antibacterial peptide. Affects Gram-positive bacteria M.luteus, B.megaterium, A.viridans, S.aureus and S.saprophyticus. Moderate activity against P.acidilactici and B.subtilis QB935. Also affects Gram-negative bacterium, D22 form of E.coli. The chain is Defensin from Pyrrhocoris apterus (Sap sucking bug).